Consider the following 402-residue polypeptide: MASWAEPSEPAALRLPGAPLLEGFEVLDGVDDAEEEDDLSGLPPLEDMGQPTVEEAEQPGALAREFLAATEPEPAPAPAPEEWLDILGNGLLRMKTLVPGPKGSSRPLKGQVVTVHLQMSLENGTRVQEEPELAFTLGDCDVIQALDLSVPLMDVGETAMVTADSKYCYGPQGRSPYIPPHAALCLEVTLKTAEDGPDLEMLSGQERVALANRKRECGNAHYQRADFVLAANSYDLAIKAITSNTKVDMTCEEEEELLQLKVKCLNNLAASQLKLDHYRAALRSCSQVLEHQPDNIKALFRKGKVLAQQGEYSEAIPILRAALKLEPSNKTIHAELSKLVKKRAAQRSTETALYRKMLGNPSRLPAKCPGKGAWSIPWKWLFGATAVALGGVALSVVIAARN.

Acidic residues predominate over residues 28 to 39; it reads DGVDDAEEEDDL. A disordered region spans residues 28 to 54; it reads DGVDDAEEEDDLSGLPPLEDMGQPTVE. Positions 110–194 constitute a PPIase FKBP-type domain; the sequence is GQVVTVHLQM…CLEVTLKTAE (85 aa). The stretch at 211-244 is one TPR 1 repeat; it reads ANRKRECGNAHYQRADFVLAANSYDLAIKAITSN. Residues lysine 239, lysine 261, lysine 263, and lysine 274 each participate in a glycyl lysine isopeptide (Lys-Gly) (interchain with G-Cter in ubiquitin) cross-link. 2 TPR repeats span residues 262–295 and 296–329; these read VKCL…QPDN and IKAL…EPSN. Serine 286 is subject to Phosphoserine. Glycyl lysine isopeptide (Lys-Gly) (interchain with G-Cter in ubiquitin) cross-links involve residues lysine 297, lysine 304, lysine 324, lysine 330, lysine 338, lysine 341, and lysine 342. A helical membrane pass occupies residues 380 to 400; it reads WLFGATAVALGGVALSVVIAA.

As to quaternary structure, homomultimers or heteromultimers (Potential). Forms heterodimer with calmodulin. When activated by calmodulin and calcium, interacts with the BH4 domain of BCL2 and weakly with BCLX isoform Bcl-X(L). Does not bind and inhibit calcineurin. Interacts with ZFYVE27; may negatively regulate ZFYVE27 phosphorylation. The cofactor is Ca(2+). Post-translationally, ubiquitinated by PRKN during mitophagy, leading to its degradation and enhancement of mitophagy. Deubiquitinated by USP30. As to expression, detected throughout the embryonic body, in caudal neural tube, limbs and head. Detected in adult retina, brain, heart, kidney, liver, pancreas, lung, testis and urinary bladder (at protein level). Detected in adult brain, kidney, liver, testis and trigeminal nerve, and in embryo. Detected at lower levels in lung, spleen, heart and ovary. Widely expressed in forebrain. Detected in the Purkinje cell layer in the cerebellum and in hippocampus neurons.

Its subcellular location is the mitochondrion membrane. It catalyses the reaction [protein]-peptidylproline (omega=180) = [protein]-peptidylproline (omega=0). In terms of biological role, constitutively inactive PPiase, which becomes active when bound to calmodulin and calcium. Seems to act as a chaperone for BCL2, targets it to the mitochondria and modulates its phosphorylation state. The BCL2/FKBP8/calmodulin/calcium complex probably interferes with the binding of BCL2 to its targets. The active form of FKBP8 may therefore play a role in the regulation of apoptosis. Required for normal embryonic development. This is Peptidyl-prolyl cis-trans isomerase FKBP8 (Fkbp8) from Mus musculus (Mouse).